The sequence spans 243 residues: 1-(5-phosphoribosyl)-5-[(5-phosphoribosylamino)methylideneamino] imidazole-4-carboxamide isomerase (243 aa).

Asp8 serves as the catalytic Proton acceptor. Catalysis depends on Asp130, which acts as the Proton donor.

This sequence belongs to the HisA/HisF family.

Its subcellular location is the cytoplasm. It carries out the reaction 1-(5-phospho-beta-D-ribosyl)-5-[(5-phospho-beta-D-ribosylamino)methylideneamino]imidazole-4-carboxamide = 5-[(5-phospho-1-deoxy-D-ribulos-1-ylimino)methylamino]-1-(5-phospho-beta-D-ribosyl)imidazole-4-carboxamide. The protein operates within amino-acid biosynthesis; L-histidine biosynthesis; L-histidine from 5-phospho-alpha-D-ribose 1-diphosphate: step 4/9. The polypeptide is 1-(5-phosphoribosyl)-5-[(5-phosphoribosylamino)methylideneamino] imidazole-4-carboxamide isomerase (Methylococcus capsulatus (strain ATCC 33009 / NCIMB 11132 / Bath)).